A 306-amino-acid chain; its full sequence is Serrate RNA effector molecule homolog (306 aa).

The tract at residues 1 to 28 (HKEEELLGSSGGPPPEEPPKEGNPAEIN) is disordered. Threonine 101 is subject to Phosphothreonine. At serine 109 the chain carries Phosphoserine. The segment at 251–284 (GPPYPHGPYGAGRGNYDAFRGQGGYPGKPRNRMV) is disordered. Arginine 263, arginine 270, and arginine 280 each carry omega-N-methylarginine.

Belongs to the ARS2 family. In terms of assembly, interacts with CASP8AP2, ERBB4, NCBP1/CBP80 and DROSHA. Interacts with LUZP4. Interacts with NCBP2/CBP20 and NCBP3.

Its subcellular location is the nucleus. It is found in the nucleoplasm. The protein resides in the cytoplasm. Functionally, acts as a mediator between the cap-binding complex (CBC) and the primary microRNAs (miRNAs) processing machinery during cell proliferation. Contributes to the stability and delivery of capped primary miRNA transcripts to the primary miRNA processing complex containing DGCR8 and DROSHA, thereby playing a role in RNA-mediated gene silencing (RNAi) by miRNAs. Binds capped RNAs (m7GpppG-capped RNA); however interaction is probably mediated via its interaction with NCBP1/CBP80 component of the CBC complex. Involved in cell cycle progression at S phase. Does not directly confer arsenite resistance but rather modulates arsenic sensitivity. Independently of its activity on miRNAs, necessary and sufficient to promote neural stem cell self-renewal. Does so by directly binding SOX2 promoter and positively regulating its transcription. The polypeptide is Serrate RNA effector molecule homolog (SRRT) (Cricetulus griseus (Chinese hamster)).